Consider the following 30-residue polypeptide: Cyclotide mela-5 (30 aa).

Residues 1-30 constitute a cross-link (cyclopeptide (Gly-Asp)); sequence GSAIACGESCFKFKCYTPGCSCSYPICKKD. 3 disulfides stabilise this stretch: Cys6–Cys20, Cys10–Cys22, and Cys15–Cys27.

This is a cyclic peptide. In terms of processing, contains 3 disulfide bonds.

In terms of biological role, probably participates in a plant defense mechanism (Potential). Binds to and induces leakage in phospholipd membranes, particularly ones containing 1-palmitoyl-2-oleophosphatidylethanolamine (POPE). This Melicytus latifolius (Norfolk Island mahoe) protein is Cyclotide mela-5.